We begin with the raw amino-acid sequence, 140 residues long: Neurotrophin-7 (140 aa).

Positions 1 to 7 are excised as a propeptide; sequence PGPRVRR. 3 disulfide bridges follow: Cys21–Cys101, Cys64–Cys129, and Cys89–Cys131.

The protein belongs to the NGF-beta family.

It localises to the secreted. In Cyprinus carpio (Common carp), this protein is Neurotrophin-7 (ntf7).